Consider the following 512-residue polypeptide: Histidine ammonia-lyase (512 aa).

Positions 144–146 (ASG) form a cross-link, 5-imidazolinone (Ala-Gly). 2,3-didehydroalanine (Ser) is present on Ser-145.

The protein belongs to the PAL/histidase family. Contains an active site 4-methylidene-imidazol-5-one (MIO), which is formed autocatalytically by cyclization and dehydration of residues Ala-Ser-Gly.

The protein localises to the cytoplasm. It catalyses the reaction L-histidine = trans-urocanate + NH4(+). It participates in amino-acid degradation; L-histidine degradation into L-glutamate; N-formimidoyl-L-glutamate from L-histidine: step 1/3. The polypeptide is Histidine ammonia-lyase (Desulfotalea psychrophila (strain LSv54 / DSM 12343)).